Reading from the N-terminus, the 429-residue chain is 3-oxo-tetronate kinase (429 aa).

Residues Ser268, 366-369 (GGET), and Gly410 each bind ATP.

The protein belongs to the four-carbon acid sugar kinase family.

It catalyses the reaction 3-dehydro-L-erythronate + ATP = 3-dehydro-4-O-phospho-L-erythronate + ADP + H(+). It carries out the reaction 3-dehydro-D-erythronate + ATP = 3-dehydro-4-O-phospho-D-erythronate + ADP + H(+). Its function is as follows. Catalyzes the ATP-dependent phosphorylation of 3-oxo-tetronate to 3-oxo-tetronate 4-phosphate. The sequence is that of 3-oxo-tetronate kinase from Pseudomonas savastanoi pv. phaseolicola (strain 1448A / Race 6) (Pseudomonas syringae pv. phaseolicola (strain 1448A / Race 6)).